The sequence spans 85 residues: RNA-binding protein Hfq (85 aa).

One can recognise a Sm domain in the interval aspartate 9–valine 68.

It belongs to the Hfq family. Homohexamer.

In terms of biological role, RNA chaperone that binds small regulatory RNA (sRNAs) and mRNAs to facilitate mRNA translational regulation in response to envelope stress, environmental stress and changes in metabolite concentrations. Also binds with high specificity to tRNAs. The sequence is that of RNA-binding protein Hfq from Legionella pneumophila (strain Paris).